The sequence spans 332 residues: CXADR-like membrane protein (332 aa).

The signal sequence occupies residues 1–19; the sequence is MHTLIRSFLGLWYVLGALA. Ig-like C2-type domains are found at residues 20–123 and 130–220; these read QTEI…SFIT and PSEL…VDVT. Residues 20-231 are Extracellular-facing; it reads QTEIKLVADE…QSVSNTGILA (212 aa). 2 disulfides stabilise this stretch: Cys-35-Cys-109 and Cys-151-Cys-204. Residue Asn-193 is glycosylated (N-linked (GlcNAc...) asparagine). The helical transmembrane segment at 232 to 252 threads the bilayer; sequence GVACGVVVGVFLIFFTVWLLF. The Cytoplasmic segment spans residues 253-332; that stretch reads HKKEFKKREE…EQRHHCLEKI (80 aa). Positions 276–332 are disordered; it reads PKARLVKPGSSSSDSRSSQSGSSSTRSTTNSASRSQRTHSTQETPHGEQRHHCLEKI. A compositionally biased stretch (low complexity) spans 285–310; that stretch reads SSSSDSRSSQSGSSSTRSTTNSASRS. A compositionally biased stretch (basic and acidic residues) spans 320–332; it reads PHGEQRHHCLEKI.

The protein resides in the cell junction. Its subcellular location is the tight junction. It localises to the cell membrane. In Xenopus tropicalis (Western clawed frog), this protein is CXADR-like membrane protein (clmp).